The chain runs to 93 residues: uncharacterized protein (93 aa).

2 helical membrane-spanning segments follow: residues 7–27 (LIFLGIILMFIGFFMITLGMI) and 70–90 (ILSVLIAILMIIWMFLFAFGI).

It localises to the cell membrane. This is an uncharacterized protein from Methanocaldococcus jannaschii (strain ATCC 43067 / DSM 2661 / JAL-1 / JCM 10045 / NBRC 100440) (Methanococcus jannaschii).